We begin with the raw amino-acid sequence, 212 residues long: Methylthioribulose-1-phosphate dehydratase (212 aa).

Histidine 97 and histidine 99 together coordinate Zn(2+).

The protein belongs to the aldolase class II family. MtnB subfamily. Homotetramer. It depends on Zn(2+) as a cofactor.

The catalysed reaction is 5-(methylsulfanyl)-D-ribulose 1-phosphate = 5-methylsulfanyl-2,3-dioxopentyl phosphate + H2O. It participates in amino-acid biosynthesis; L-methionine biosynthesis via salvage pathway; L-methionine from S-methyl-5-thio-alpha-D-ribose 1-phosphate: step 2/6. Functionally, catalyzes the dehydration of methylthioribulose-1-phosphate (MTRu-1-P) into 2,3-diketo-5-methylthiopentyl-1-phosphate (DK-MTP-1-P). This Bacillus thuringiensis (strain Al Hakam) protein is Methylthioribulose-1-phosphate dehydratase.